A 151-amino-acid polypeptide reads, in one-letter code: Sigma factor binding protein 1, chloroplastic (151 aa).

A compositionally biased stretch (low complexity) spans 1–13 (MESSSSTFLTTTS). 2 disordered regions span residues 1 to 41 (MESS…KPIK) and 66 to 93 (TGQDAVDLQPEPIYSPSSDDHNLSPPAE). The N-terminal 54 residues, 1 to 54 (MESSSSTFLTTTSLDKKKPSPVSRKSPKQKKKTTSTNKPIKVRYISNPMRVQTC), are a transit peptide targeting the chloroplast. Residues 16–32 (KKKPSPVSRKSPKQKKK) carry the Bipartite nuclear localization signal motif. Positions 58-67 (FRELVQELTG) match the VQ motif.

As to quaternary structure, interacts with the sigma factor SIGA in chloroplast. Interacts with WRKY25 and WRKY33 in the nucleus. In terms of tissue distribution, expressed in leaves and roots, but not in flowers.

Its subcellular location is the plastid. The protein resides in the chloroplast. The protein localises to the nucleus. In terms of biological role, contributes to plant defense. May regulate chloroplast metabolism upon infection with pathogens such as Pseudomonas syringae. Functions as activator of WRKY33 in plant defense against necrotrophic pathogens by stimulating the DNA-binding activity of WRKY33. This chain is Sigma factor binding protein 1, chloroplastic (SIB1), found in Arabidopsis thaliana (Mouse-ear cress).